A 649-amino-acid chain; its full sequence is Transcription factor E2-alpha (649 aa).

Disordered regions lie at residues 37–107 (RPAS…SERN), 132–207 (GLSS…AKTP), 296–325 (TYSG…SSSG), and 339–376 (DHSS…ALSP). Polar residues predominate over residues 57–71 (SESWGNSEQNSSSFD). The span at 132 to 148 (GLSSPGPLSPSGVKSSS) shows a compositional bias: low complexity. Phosphoserine occurs at positions 135 and 140. The short motif at 171–177 (PKKVRKV) is the Nuclear localization signal element. Positions 339–352 (DHSSNNFSPSPSTP) are enriched in low complexity. Residue threonine 351 is modified to Phosphothreonine. Position 355 is a phosphoserine (serine 355). Omega-N-methylarginine is present on arginine 367. At serine 375 the chain carries Phosphoserine. Positions 385 to 420 (LSKMEDRLDEAIHVLRSHAVGTASELHGLLPGHSTL) are leucine-zipper. The tract at residues 435-547 (AGLVSGSHPE…KAEREKERRV (113 aa)) is disordered. Over residues 459 to 477 (SLPSQPSSLPDLSQRPPDS) the composition is skewed to low complexity. Residue lysine 494 forms a Glycyl lysine isopeptide (Lys-Gly) (interchain with G-Cter in SUMO2) linkage. At serine 524 the chain carries Phosphoserine. Aspartate 526 is subject to Phosphothreonine. Residues 537–547 (QKAEREKERRV) show a composition bias toward basic and acidic residues. Residues 544–597 (ERRVANNARERLRVRDINEAFKELGRMCQLHLSTEKPQTKLLILHQAVAVILSL) enclose the bHLH domain. Lysine 620 is covalently cross-linked (Glycyl lysine isopeptide (Lys-Gly) (interchain with G-Cter in SUMO2)).

Homodimer. Heterodimer; efficient DNA binding requires dimerization with another bHLH protein. Forms a heterodimer with TWIST1 and TWIST2. Forms a heterodimer with NEUROD1; the heterodimer is inhibited in presence of ID2, but not NR0B2, to E-box element. Forms a heterodimer with TCF15; the heterodimer binds E-box element. Forms a heterodimer with MYOG; heterodimerization enhances MYOG DNA-binding and transcriptional activities. Forms a heterodimer with ATOH8; repress transcription of TCF3 and TCF3-NEUROG3 dimer-induced transactivation of E box-dependent promoters. Component of a nuclear TAL-1 complex composed at least of CBFA2T3, LDB1, TAL1 and TCF3. Interacts with NEUROD2. Interacts with EP300. Interacts with PTF1A, TGFB1I1. Interacts with UBE2I. Interacts with BHLHA9. Interacts with ASB2; the interaction is mediated by SKP2 and targets TCF3 for Notch-induced proteasomal degradation. Interacts with transcription factor ASCL5/AmeloD. In terms of assembly, interacts with RALGAPA1. Interacts with FIGLA. As to quaternary structure, forms a heterodimer with ATOH7; required for ATOH7 DNA-binding. Post-translationally, phosphorylated following NGF stimulation. Undergoes Notch-induced ubiquitination and subsequent proteasomal degradation which is mediated by ASB1 or ASB2, the substrate-recognition components of probable ECS E3 ubiquitin-protein ligase complexes.

Its subcellular location is the nucleus. Functionally, transcriptional regulator involved in the initiation of neuronal differentiation and mesenchymal to epithelial transition. Heterodimers between TCF3 and tissue-specific basic helix-loop-helix (bHLH) proteins play major roles in determining tissue-specific cell fate during embryogenesis, like muscle or early B-cell differentiation. Together with TCF15, required for the mesenchymal to epithelial transition. Dimers bind DNA on E-box motifs: 5'-CANNTG-3'. Binds to the kappa-E2 site in the kappa immunoglobulin gene enhancer. Binds to the consensus sequence CAC/GCTGT/C present, in the chymotrypsin, insulin, AP-4, and several other gene enhancer motifs. Its function is as follows. Facilitates ATOH7 binding to DNA at the consensus sequence 5'-CAGGTG-3', and positively regulates transcriptional activity. This is Transcription factor E2-alpha (Tcf3) from Rattus norvegicus (Rat).